The sequence spans 361 residues: Neuronal-specific septin-3 (361 aa).

The segment at methionine 1–arginine 46 is disordered. Residues valine 15–proline 34 are compositionally biased toward low complexity. Over residues glycine 36–arginine 46 the composition is skewed to gly residues. Residues alanine 70–aspartate 342 enclose the Septin-type G domain. Residues glycine 80–serine 87 form a G1 motif region. GTP is bound by residues glycine 80–serine 87 and threonine 114. Residues aspartate 137–glycine 140 are G3 motif. Residues alanine 219–aspartate 222 are G4 motif. GTP-binding positions include lysine 220–glutamate 228, glycine 276, and arginine 291. The segment at asparagine 341–leucine 361 is disordered. Over residues isoleucine 349–leucine 361 the composition is skewed to polar residues.

The protein belongs to the TRAFAC class TrmE-Era-EngA-EngB-Septin-like GTPase superfamily. Septin GTPase family.

It is found in the cytoplasm. May be involved in cytokinesis. The sequence is that of Neuronal-specific septin-3 from Danio rerio (Zebrafish).